Reading from the N-terminus, the 103-residue chain is Floral defensin-like protein 1 (103 aa).

Positions 1 to 25 (MARSICFFAVAILALMLFAAYDAEA) are cleaved as a signal peptide. Disulfide bonds link C28–C72, C32–C48, C39–C59, C45–C66, and C49–C68. Residues 73-103 (VFEKTEATQTETFTKDVNTLAEALLEADMMV) constitute a propeptide, removed in mature form.

The protein belongs to the DEFL family. In terms of processing, when compared to other plant defensins, the petunia defensins have an additional fifth disulfide bond. In terms of tissue distribution, petals.

The protein localises to the secreted. It is found in the vacuole. In terms of biological role, plant defense peptide with antifungal activity against F.oxysporum and B.cinerea. This is Floral defensin-like protein 1 (D1) from Petunia hybrida (Petunia).